Here is a 48-residue protein sequence, read N- to C-terminus: U1-theraphotoxin-Agm1a (48 aa).

Intrachain disulfides connect cysteine 4-cysteine 34, cysteine 8-cysteine 40, and cysteine 22-cysteine 45. Methionine 44 is modified (methionine sulfoxide; partial).

Belongs to the neurotoxin 12 (Hwtx-2) family. 01 (Ap1a) subfamily. Expressed by the venom gland.

It is found in the secreted. In terms of biological role, is toxic to both insects and mammals. Induces reversible paralysis when injected into S.frugiperda larvae. Reduces both the amplitude and frequency of responses from muscle (GF-TTM and GF-DLM) pathways in the D.melanogaster giant fiber circuit, suggesting an action at the neuromuscular junction, which is mediated by glutamatergic receptors. In mice, intracranial injection of 30 ug causes increased urination, myoclonus, hypermotility with circular movements followed by respiratory and generalized seizures resulting in death within 25-35 minutes of injection. The protein is U1-theraphotoxin-Agm1a of Acanthoscurria gomesiana (Tarantula spider).